We begin with the raw amino-acid sequence, 366 residues long: Capsular polysaccharide phosphotransferase LcbA (366 aa).

The protein belongs to the stealth family.

This chain is Capsular polysaccharide phosphotransferase LcbA (lcbA), found in Neisseria meningitidis.